A 126-amino-acid chain; its full sequence is Adult-specific rigid cuticular protein 12.4 (126 aa).

The 79-residue stretch at 9 to 87 folds into the Chitin-binding type R&amp;R domain; it reads GGAYNFGFNT…AMAALAPKAP (79 aa).

Component of the rigid cuticle of the spider. The chain is Adult-specific rigid cuticular protein 12.4 from Araneus diadematus (European garden spider).